The following is a 347-amino-acid chain: Methionine import ATP-binding protein MetN (347 aa).

The 240-residue stretch at 2–241 (IKLEGVSKTY…PATRLGRDFL (240 aa)) folds into the ABC transporter domain. 38–45 (GLSGAGKS) contributes to the ATP binding site.

This sequence belongs to the ABC transporter superfamily. Methionine importer (TC 3.A.1.24) family. As to quaternary structure, the complex is composed of two ATP-binding proteins (MetN), two transmembrane proteins (MetI) and a solute-binding protein (MetQ).

Its subcellular location is the cell inner membrane. The enzyme catalyses L-methionine(out) + ATP + H2O = L-methionine(in) + ADP + phosphate + H(+). It catalyses the reaction D-methionine(out) + ATP + H2O = D-methionine(in) + ADP + phosphate + H(+). In terms of biological role, part of the ABC transporter complex MetNIQ involved in methionine import. Responsible for energy coupling to the transport system. This Chromohalobacter salexigens (strain ATCC BAA-138 / DSM 3043 / CIP 106854 / NCIMB 13768 / 1H11) protein is Methionine import ATP-binding protein MetN.